We begin with the raw amino-acid sequence, 213 residues long: ATP phosphoribosyltransferase (213 aa).

This sequence belongs to the ATP phosphoribosyltransferase family. Short subfamily. As to quaternary structure, heteromultimer composed of HisG and HisZ subunits.

The protein localises to the cytoplasm. The enzyme catalyses 1-(5-phospho-beta-D-ribosyl)-ATP + diphosphate = 5-phospho-alpha-D-ribose 1-diphosphate + ATP. It functions in the pathway amino-acid biosynthesis; L-histidine biosynthesis; L-histidine from 5-phospho-alpha-D-ribose 1-diphosphate: step 1/9. Functionally, catalyzes the condensation of ATP and 5-phosphoribose 1-diphosphate to form N'-(5'-phosphoribosyl)-ATP (PR-ATP). Has a crucial role in the pathway because the rate of histidine biosynthesis seems to be controlled primarily by regulation of HisG enzymatic activity. The chain is ATP phosphoribosyltransferase from Listeria welshimeri serovar 6b (strain ATCC 35897 / DSM 20650 / CCUG 15529 / CIP 8149 / NCTC 11857 / SLCC 5334 / V8).